The following is a 65-amino-acid chain: Hainantoxin-X-3 (65 aa).

An N-terminal signal peptide occupies residues 1-20 (MNMKILVLVAVLCLVVSTHA). Positions 21–37 (ERHSKTDMEDSPMIQER) are excised as a propeptide. Disulfide bonds link Cys-46-Cys-59 and Cys-55-Cys-64.

Belongs to the neurotoxin 36 family. 02 subfamily. As to expression, expressed by the venom gland.

It localises to the secreted. Reversibly blocks N-type calcium channels (Cav2.2/CACNA1B) in rat dorsal root ganglion cells. Elicits no toxic symptoms in either vertebrates or invertebrates during a period of 48 hours post-injection, when it was assayed in vivo by direct injection into mice and cockroaches. The sequence is that of Hainantoxin-X-3 from Cyriopagopus hainanus (Chinese bird spider).